Here is a 471-residue protein sequence, read N- to C-terminus: Mitochondrial distribution and morphology protein 10 (471 aa).

Residues 313 to 338 (SNSAATPPRIKNSDSQVLSNNSTDSK) are disordered. A compositionally biased stretch (polar residues) spans 325–338 (SDSQVLSNNSTDSK).

This sequence belongs to the MDM10 family. As to quaternary structure, component of the ER-mitochondria encounter structure (ERMES) or MDM complex, composed of MMM1, MDM10, MDM12 and MDM34. Associates with the mitochondrial outer membrane sorting assembly machinery SAM(core) complex.

Its subcellular location is the mitochondrion outer membrane. Its function is as follows. Component of the ERMES/MDM complex, which serves as a molecular tether to connect the endoplasmic reticulum and mitochondria. Components of this complex are involved in the control of mitochondrial shape and protein biogenesis and may function in phospholipid exchange. MDM10 is involved in the late assembly steps of the general translocase of the mitochondrial outer membrane (TOM complex). Functions in the TOM40-specific route of the assembly of outer membrane beta-barrel proteins, including the association of TOM40 with the receptor TOM22 and small TOM proteins. Can associate with the SAM(core) complex as well as the MDM12-MMM1 complex, both involved in late steps of the major beta-barrel assembly pathway, that is responsible for biogenesis of all outer membrane beta-barrel proteins. May act as a switch that shuttles between both complexes and channels precursor proteins into the TOM40-specific pathway. Plays a role in mitochondrial morphology and in the inheritance of mitochondria. This chain is Mitochondrial distribution and morphology protein 10, found in Debaryomyces hansenii (strain ATCC 36239 / CBS 767 / BCRC 21394 / JCM 1990 / NBRC 0083 / IGC 2968) (Yeast).